Reading from the N-terminus, the 92-residue chain is Phosphoribosyl-ATP pyrophosphatase (92 aa).

It belongs to the PRA-PH family.

It is found in the cytoplasm. It catalyses the reaction 1-(5-phospho-beta-D-ribosyl)-ATP + H2O = 1-(5-phospho-beta-D-ribosyl)-5'-AMP + diphosphate + H(+). The protein operates within amino-acid biosynthesis; L-histidine biosynthesis; L-histidine from 5-phospho-alpha-D-ribose 1-diphosphate: step 2/9. This chain is Phosphoribosyl-ATP pyrophosphatase, found in Leptospira interrogans serogroup Icterohaemorrhagiae serovar copenhageni (strain Fiocruz L1-130).